A 192-amino-acid polypeptide reads, in one-letter code: Zinc finger CCHC domain-containing protein 10 (192 aa).

The CCHC-type zinc finger occupies 43 to 60 (VRCQKCLEFGHWTYECTG). Residues 89–192 (QSIGETNVER…DEPPKKKKKK (104 aa)) form a disordered region. 2 stretches are compositionally biased toward low complexity: residues 109–136 (TSSS…SSSS) and 144–179 (SSSS…STDS).

The sequence is that of Zinc finger CCHC domain-containing protein 10 (ZCCHC10) from Homo sapiens (Human).